The primary structure comprises 456 residues: Histidine--tRNA ligase (456 aa).

Belongs to the class-II aminoacyl-tRNA synthetase family. As to quaternary structure, homodimer.

The protein resides in the cytoplasm. It carries out the reaction tRNA(His) + L-histidine + ATP = L-histidyl-tRNA(His) + AMP + diphosphate + H(+). The sequence is that of Histidine--tRNA ligase from Borreliella afzelii (strain PKo) (Borrelia afzelii).